Consider the following 770-residue polypeptide: Arf-GAP with coiled-coil, ANK repeat and PH domain-containing protein 2 (770 aa).

The BAR domain maps to 1–226 (MKMTVDFEEC…MKDLGAQLDR (226 aa)). A PH domain is found at 266–361 (GIVMEGYLFK…WIKAVQTSIA (96 aa)). A disordered region spans residues 371–391 (SEKLDKKSSPSTGSLDSGNES). Residues 379-388 (SPSTGSLDSG) are compositionally biased toward polar residues. A phosphoserine mark is found at Ser384 and Ser387. One can recognise an Arf-GAP domain in the interval 399-520 (ESALQRVQCI…KFVDKYSALL (122 aa)). The C4-type zinc-finger motif lies at 414–437 (CCDCGLADPRWASINLGITLCIEC). At Ser521 the chain carries Phosphoserine. The tract at residues 542–572 (ARASVHTPVKSNDSGIQQCSEDGRESLPSTV) is disordered. Residues 550 to 561 (VKSNDSGIQQCS) show a composition bias toward polar residues. Residues Ser573 and Ser576 each carry the phosphoserine modification. ANK repeat units lie at residues 632-661 (NQAT…NVNQ), 665-694 (QGRG…NQHA), and 698-727 (EGKD…NEEM). Tyr734 is subject to Phosphotyrosine. Ser767 carries the post-translational modification Phosphoserine.

Interacts with RAB35 (GTP-bound form); the interaction is direct and probably recruits ACAP2 to membranes. Interacts with MICALL1; the interaction is indirect through RAB35.

It localises to the endosome membrane. The protein resides in the cell membrane. GAP activity stimulated by phosphatidylinositol 4,5-bisphosphate (PIP2) and phosphatidic acid. Functionally, GTPase-activating protein (GAP) for ADP ribosylation factor 6 (ARF6). Doesn't show GAP activity for RAB35. The protein is Arf-GAP with coiled-coil, ANK repeat and PH domain-containing protein 2 (Acap2) of Mus musculus (Mouse).